Here is a 252-residue protein sequence, read N- to C-terminus: 3-dehydroquinate dehydratase (252 aa).

3-dehydroquinate contacts are provided by residues serine 21, 46 to 48 (EWR), and arginine 82. Histidine 143 (proton donor/acceptor) is an active-site residue. Lysine 170 functions as the Schiff-base intermediate with substrate in the catalytic mechanism. 3-dehydroquinate is bound by residues arginine 213, serine 232, and glutamine 236.

This sequence belongs to the type-I 3-dehydroquinase family. As to quaternary structure, homodimer.

The catalysed reaction is 3-dehydroquinate = 3-dehydroshikimate + H2O. It participates in metabolic intermediate biosynthesis; chorismate biosynthesis; chorismate from D-erythrose 4-phosphate and phosphoenolpyruvate: step 3/7. Involved in the third step of the chorismate pathway, which leads to the biosynthesis of aromatic amino acids. Catalyzes the cis-dehydration of 3-dehydroquinate (DHQ) and introduces the first double bond of the aromatic ring to yield 3-dehydroshikimate. This Escherichia coli (strain SE11) protein is 3-dehydroquinate dehydratase.